The primary structure comprises 84 residues: Large ribosomal subunit protein uL23 (84 aa).

The protein belongs to the universal ribosomal protein uL23 family. In terms of assembly, part of the 50S ribosomal subunit. Contacts protein L29.

Its function is as follows. Binds to 23S rRNA. One of the proteins that surrounds the polypeptide exit tunnel on the outside of the ribosome. This is Large ribosomal subunit protein uL23 from Haloquadratum walsbyi (strain DSM 16790 / HBSQ001).